The chain runs to 538 residues: Eukaryotic translation initiation factor 3 subunit L (538 aa).

The PCI domain maps to 305–513 (TFSDILLYIQ…IHIADTKVSH (209 aa)).

This sequence belongs to the eIF-3 subunit L family. Component of the eukaryotic translation initiation factor 3 (eIF-3) complex. The eIF-3 complex interacts with pix.

Its subcellular location is the cytoplasm. Functionally, component of the eukaryotic translation initiation factor 3 (eIF-3) complex, which is involved in protein synthesis of a specialized repertoire of mRNAs and, together with other initiation factors, stimulates binding of mRNA and methionyl-tRNAi to the 40S ribosome. The eIF-3 complex specifically targets and initiates translation of a subset of mRNAs involved in cell proliferation. This Drosophila virilis (Fruit fly) protein is Eukaryotic translation initiation factor 3 subunit L.